The chain runs to 733 residues: Arginine decarboxylase 1A, chloroplastic (733 aa).

A chloroplast-targeting transit peptide spans 1 to 44 (MPALGCCVDAAVSPPPGYSFLWDSSLPAPEIFPSGVPPSTNTAV). Lys157 carries the post-translational modification N6-(pyridoxal phosphate)lysine. Pyridoxal 5'-phosphate-binding positions include Ser309, Gly346, and 395–398 (ESGR). 460–461 (YA) contributes to the substrate binding site. Cys548 functions as the Proton donor; shared with dimeric partner in the catalytic mechanism. Asp549 serves as a coordination point for substrate. Tyr592 contacts pyridoxal 5'-phosphate.

The protein belongs to the Orn/Lys/Arg decarboxylase class-II family. SpeA subfamily. In terms of assembly, interacts, via its C-terminal internal region, with the tobacco mosaic virus (TMV) replicase helicase region. Requires Mg(2+) as cofactor. Pyridoxal 5'-phosphate is required as a cofactor.

The protein localises to the plastid. Its subcellular location is the chloroplast. It carries out the reaction L-arginine + H(+) = agmatine + CO2. It functions in the pathway alkaloid biosynthesis; nicotine biosynthesis. It participates in amine and polyamine biosynthesis; agmatine biosynthesis; agmatine from L-arginine: step 1/1. Involved in the biosynthesis of pyridine alkaloid natural products, leading mainly to the production of anabasine, anatabine, nicotine and nornicotine, effective deterrents against herbivores with antiparasitic and pesticide properties (neurotoxins); nornicotine serves as the precursor in the synthesis of the carcinogen compound N'-nitrosonornicotine (NNN). Required for the biosynthesis of putrescine. Catalyzes the first step of polyamine (PA) biosynthesis to produce putrescine from arginine. The protein is Arginine decarboxylase 1A, chloroplastic of Nicotiana tabacum (Common tobacco).